Reading from the N-terminus, the 471-residue chain is ATP synthase subunit beta (471 aa).

159 to 166 provides a ligand contact to ATP; the sequence is GGAGVGKT.

It belongs to the ATPase alpha/beta chains family. In terms of assembly, F-type ATPases have 2 components, CF(1) - the catalytic core - and CF(0) - the membrane proton channel. CF(1) has five subunits: alpha(3), beta(3), gamma(1), delta(1), epsilon(1). CF(0) has four main subunits: a(1), b(1), b'(1) and c(9-12).

It localises to the cell membrane. It catalyses the reaction ATP + H2O + 4 H(+)(in) = ADP + phosphate + 5 H(+)(out). Produces ATP from ADP in the presence of a proton gradient across the membrane. The catalytic sites are hosted primarily by the beta subunits. This chain is ATP synthase subunit beta, found in Heliobacterium modesticaldum (strain ATCC 51547 / Ice1).